The chain runs to 122 residues: Cytochrome b-c1 complex subunit 7-1, mitochondrial (122 aa).

It belongs to the UQCRB/QCR7 family. As to quaternary structure, component of the ubiquinol-cytochrome c oxidoreductase (cytochrome b-c1 complex, complex III, CIII), a multisubunit enzyme composed of 10 subunits. The complex is composed of 3 respiratory subunits cytochrome b (MT-CYB), cytochrome c1 (CYC1-1 or CYC1-2) and Rieske protein (UCR1-1 or UCR1-2), 2 core protein subunits MPPalpha1 (or MPPalpha2) and MPPB, and 5 low-molecular weight protein subunits QCR7-1 (or QCR7-2), UCRQ-1 (or UCRQ-2), QCR9, UCRY and probably QCR6-1 (or QCR6-2). The complex exists as an obligatory dimer and forms supercomplexes (SCs) in the inner mitochondrial membrane with NADH-ubiquinone oxidoreductase (complex I, CI), resulting in different assemblies (supercomplexes SCI(1)III(2) and SCI(2)III(4)).

It localises to the mitochondrion inner membrane. Component of the ubiquinol-cytochrome c oxidoreductase, a multisubunit transmembrane complex that is part of the mitochondrial electron transport chain which drives oxidative phosphorylation. The respiratory chain contains 3 multisubunit complexes succinate dehydrogenase (complex II, CII), ubiquinol-cytochrome c oxidoreductase (cytochrome b-c1 complex, complex III, CIII) and cytochrome c oxidase (complex IV, CIV), that cooperate to transfer electrons derived from NADH and succinate to molecular oxygen, creating an electrochemical gradient over the inner membrane that drives transmembrane transport and the ATP synthase. The cytochrome b-c1 complex catalyzes electron transfer from ubiquinol to cytochrome c, linking this redox reaction to translocation of protons across the mitochondrial inner membrane, with protons being carried across the membrane as hydrogens on the quinol. In the process called Q cycle, 2 protons are consumed from the matrix, 4 protons are released into the intermembrane space and 2 electrons are passed to cytochrome c. In Arabidopsis thaliana (Mouse-ear cress), this protein is Cytochrome b-c1 complex subunit 7-1, mitochondrial (QCR7-1).